The sequence spans 88 residues: Snakin-1 (88 aa).

Positions 1–25 are cleaved as a signal peptide; sequence MKLFLLTLLLVTLVITPSLIQTTMA.

The protein belongs to the GASA family. Six disulfide bonds may be present. In terms of tissue distribution, expressed in tubers, stems, axillary and young floral buds, sepals, petals, stamens and carpels, but not in roots, stolons, shoot apex meristem or young leaves.

The protein resides in the secreted. Its subcellular location is the cell wall. In terms of biological role, has an antimicrobial activity. Causes a rapid aggregation of both Gram-positive and Gram-negative bacteria, but the antimicrobial activity is not correlated with the capacity to aggregate bacteria. In Solanum tuberosum (Potato), this protein is Snakin-1 (SN1).